Here is a 232-residue protein sequence, read N- to C-terminus: Ubiquinone biosynthesis O-methyltransferase (232 aa).

Positions 36, 55, 76, and 120 each coordinate S-adenosyl-L-methionine.

Belongs to the methyltransferase superfamily. UbiG/COQ3 family.

The enzyme catalyses a 3-demethylubiquinol + S-adenosyl-L-methionine = a ubiquinol + S-adenosyl-L-homocysteine + H(+). It carries out the reaction a 3-(all-trans-polyprenyl)benzene-1,2-diol + S-adenosyl-L-methionine = a 2-methoxy-6-(all-trans-polyprenyl)phenol + S-adenosyl-L-homocysteine + H(+). It participates in cofactor biosynthesis; ubiquinone biosynthesis. O-methyltransferase that catalyzes the 2 O-methylation steps in the ubiquinone biosynthetic pathway. The polypeptide is Ubiquinone biosynthesis O-methyltransferase (Pseudomonas aeruginosa (strain LESB58)).